Reading from the N-terminus, the 257-residue chain is Imidazole glycerol phosphate synthase subunit HisF (257 aa).

Active-site residues include Asp-11 and Asp-130.

This sequence belongs to the HisA/HisF family. Heterodimer of HisH and HisF.

Its subcellular location is the cytoplasm. The enzyme catalyses 5-[(5-phospho-1-deoxy-D-ribulos-1-ylimino)methylamino]-1-(5-phospho-beta-D-ribosyl)imidazole-4-carboxamide + L-glutamine = D-erythro-1-(imidazol-4-yl)glycerol 3-phosphate + 5-amino-1-(5-phospho-beta-D-ribosyl)imidazole-4-carboxamide + L-glutamate + H(+). It participates in amino-acid biosynthesis; L-histidine biosynthesis; L-histidine from 5-phospho-alpha-D-ribose 1-diphosphate: step 5/9. IGPS catalyzes the conversion of PRFAR and glutamine to IGP, AICAR and glutamate. The HisF subunit catalyzes the cyclization activity that produces IGP and AICAR from PRFAR using the ammonia provided by the HisH subunit. This Prochlorococcus marinus (strain MIT 9515) protein is Imidazole glycerol phosphate synthase subunit HisF.